Consider the following 203-residue polypeptide: ATP-dependent Clp protease proteolytic subunit (203 aa).

The active-site Nucleophile is Ser-100. His-125 is a catalytic residue.

The protein belongs to the peptidase S14 family. As to quaternary structure, component of the chloroplastic Clp protease core complex.

The protein resides in the plastid. Its subcellular location is the chloroplast stroma. It carries out the reaction Hydrolysis of proteins to small peptides in the presence of ATP and magnesium. alpha-casein is the usual test substrate. In the absence of ATP, only oligopeptides shorter than five residues are hydrolyzed (such as succinyl-Leu-Tyr-|-NHMec, and Leu-Tyr-Leu-|-Tyr-Trp, in which cleavage of the -Tyr-|-Leu- and -Tyr-|-Trp bonds also occurs).. Its function is as follows. Cleaves peptides in various proteins in a process that requires ATP hydrolysis. Has a chymotrypsin-like activity. Plays a major role in the degradation of misfolded proteins. This Dioscorea elephantipes (Elephant's foot yam) protein is ATP-dependent Clp protease proteolytic subunit.